The chain runs to 449 residues: C4-dicarboxylate transport protein (449 aa).

The disordered stretch occupies residues 1 to 20; the sequence is MSALTESFGPVPSAKSKPPA. Positions 10 to 20 are enriched in low complexity; it reads PVPSAKSKPPA. The next 8 membrane-spanning stretches (helical) occupy residues 28-48, 66-86, 101-121, 167-187, 205-225, 241-261, 326-346, and 370-390; these read LLYL…WLSP, LIKM…IAHI, LYFE…GNVV, GDIL…MTLG, FGVI…AMAF, LIAV…GLIA, IYMT…LTWT, and FITL…GMAI.

The protein belongs to the dicarboxylate/amino acid:cation symporter (DAACS) (TC 2.A.23) family.

It localises to the cell inner membrane. In terms of biological role, responsible for the transport of dicarboxylates such as succinate, fumarate, and malate from the periplasm across the membrane. The sequence is that of C4-dicarboxylate transport protein from Rhodopseudomonas palustris (strain BisB18).